The primary structure comprises 417 residues: Serine hydroxymethyltransferase (417 aa).

(6S)-5,6,7,8-tetrahydrofolate contacts are provided by residues L121 and 125–127 (GHL). N6-(pyridoxal phosphate)lysine is present on K229. Residue 355–357 (SPF) coordinates (6S)-5,6,7,8-tetrahydrofolate.

It belongs to the SHMT family. As to quaternary structure, homodimer. The cofactor is pyridoxal 5'-phosphate.

It localises to the cytoplasm. The enzyme catalyses (6R)-5,10-methylene-5,6,7,8-tetrahydrofolate + glycine + H2O = (6S)-5,6,7,8-tetrahydrofolate + L-serine. The protein operates within one-carbon metabolism; tetrahydrofolate interconversion. It participates in amino-acid biosynthesis; glycine biosynthesis; glycine from L-serine: step 1/1. Functionally, catalyzes the reversible interconversion of serine and glycine with tetrahydrofolate (THF) serving as the one-carbon carrier. This reaction serves as the major source of one-carbon groups required for the biosynthesis of purines, thymidylate, methionine, and other important biomolecules. Also exhibits THF-independent aldolase activity toward beta-hydroxyamino acids, producing glycine and aldehydes, via a retro-aldol mechanism. The protein is Serine hydroxymethyltransferase of Buchnera aphidicola subsp. Baizongia pistaciae (strain Bp).